The sequence spans 99 residues: Ubiquitin-related modifier 1 homolog (99 aa).

At Gly99 the chain carries 1-thioglycine. Gly99 is covalently cross-linked (Glycyl lysine isopeptide (Gly-Lys) (interchain with K-? in acceptor proteins)).

This sequence belongs to the URM1 family. In terms of assembly, interacts with cer. Post-translationally, C-terminal thiocarboxylation occurs in 2 steps, it is first acyl-adenylated (-COAMP) via the hesA/moeB/thiF part of the MOCS3 homolog, then thiocarboxylated (-COSH) via the rhodanese domain of the MOCS3 homolog.

Its subcellular location is the cytoplasm. Its pathway is tRNA modification; 5-methoxycarbonylmethyl-2-thiouridine-tRNA biosynthesis. Functionally, acts as a sulfur carrier required for 2-thiolation of mcm(5)S(2)U at tRNA wobble positions of cytosolic tRNA(Lys), tRNA(Glu) and tRNA(Gln). Serves as sulfur donor in tRNA 2-thiolation reaction by being thiocarboxylated (-COSH) at its C-terminus by MOCS3. The sulfur is then transferred to tRNA to form 2-thiolation of mcm(5)S(2)U. Also acts as a ubiquitin-like protein (UBL) that is covalently conjugated via an isopeptide bond to lysine residues of target proteins such as Prx2/Jafrac1, Ciao1, Eip71CD and GILT1. The thiocarboxylated form serves as substrate for conjugation and oxidative stress specifically induces the formation of UBL-protein conjugates. This chain is Ubiquitin-related modifier 1 homolog, found in Drosophila persimilis (Fruit fly).